Reading from the N-terminus, the 309-residue chain is Cell division protein FtsQ (309 aa).

At 1–52 the chain is on the cytoplasmic side; that stretch reads MLALRGRRGKRVRYPADGVAEADEAFVLPRPLRRGVRFLISLGAGRIRFPNH. Residues 53 to 74 traverse the membrane as a helical segment; it reads TGTVAAAAFMVATGLYGMSLGG. Over 75-309 the chain is Periplasmic; that stretch reads HTQSFAQVST…KMLKAQEKRI (235 aa). Residues 89 to 157 form the POTRA domain; the sequence is FAIEDVRVSG…GTIEVVLKER (69 aa).

The protein belongs to the FtsQ/DivIB family. FtsQ subfamily.

It localises to the cell inner membrane. Essential cell division protein. This Rhizobium meliloti (strain 1021) (Ensifer meliloti) protein is Cell division protein FtsQ.